The chain runs to 157 residues: MSENEQAAKAEAPIFHVVKLYLKDLSFESPNAPESFSVESEPKAEFNLDTKATQKDDDHYEVSLEVNVKVASGDGKILFMAEVSYGGLFMVKNVPSEHIPMVLGIDCPNILFPYVRQVISSVVLEGGYKPMVLDPINFAALFHHAQQQKAAQQGEKA.

The protein belongs to the SecB family. In terms of assembly, homotetramer, a dimer of dimers. One homotetramer interacts with 1 SecA dimer.

The protein localises to the cytoplasm. In terms of biological role, one of the proteins required for the normal export of preproteins out of the cell cytoplasm. It is a molecular chaperone that binds to a subset of precursor proteins, maintaining them in a translocation-competent state. It also specifically binds to its receptor SecA. The sequence is that of Protein-export protein SecB from Magnetococcus marinus (strain ATCC BAA-1437 / JCM 17883 / MC-1).